Consider the following 447-residue polypeptide: Tubulin beta chain (447 aa).

Residues Gln11, Glu69, Ser138, Gly142, Thr143, Gly144, Asn204, and Asn226 each coordinate GTP. Glu69 contributes to the Mg(2+) binding site. A disordered region spans residues 424-447; sequence QYQEASVSEGEEEYDEEAPLEGEE. Positions 432-447 are enriched in acidic residues; that stretch reads EGEEEYDEEAPLEGEE.

This sequence belongs to the tubulin family. Dimer of alpha and beta chains. A typical microtubule is a hollow water-filled tube with an outer diameter of 25 nm and an inner diameter of 15 nM. Alpha-beta heterodimers associate head-to-tail to form protofilaments running lengthwise along the microtubule wall with the beta-tubulin subunit facing the microtubule plus end conferring a structural polarity. Microtubules usually have 13 protofilaments but different protofilament numbers can be found in some organisms and specialized cells. The cofactor is Mg(2+).

The protein resides in the cytoplasm. The protein localises to the cytoskeleton. Its function is as follows. Tubulin is the major constituent of microtubules, a cylinder consisting of laterally associated linear protofilaments composed of alpha- and beta-tubulin heterodimers. Microtubules grow by the addition of GTP-tubulin dimers to the microtubule end, where a stabilizing cap forms. Below the cap, tubulin dimers are in GDP-bound state, owing to GTPase activity of alpha-tubulin. This Venturia inaequalis (Apple scab fungus) protein is Tubulin beta chain.